Reading from the N-terminus, the 132-residue chain is MDVTRLLLATLLVFLCFFTVYSHLPPEEKLRDDRSLRSNSSVNLLDFPSVSIVALNKKSKQISRKEAEKKRSSKKEASMKKVAQPRTPLSAPCVATRYSCKPPAPACCDPCASCQCRFFRSACSCRVLRLNC.

The N-terminal stretch at 1-22 (MDVTRLLLATLLVFLCFFTVYS) is a signal peptide. N-linked (GlcNAc...) asparagine glycosylation occurs at asparagine 39. Residues 62 to 88 (ISRKEAEKKRSSKKEASMKKVAQPRTP) form a disordered region. Residues 63–79 (SRKEAEKKRSSKKEASM) are compositionally biased toward basic and acidic residues. Disulfide bonds link cysteine 93–cysteine 108, cysteine 100–cysteine 114, cysteine 107–cysteine 125, cysteine 111–cysteine 132, and cysteine 116–cysteine 123. Residues 93–132 (CVATRYSCKPPAPACCDPCASCQCRFFRSACSCRVLRLNC) form the Agouti domain.

It localises to the secreted. Functionally, involved in the regulation of melanogenesis. The binding of ASP to MC1R precludes alpha-MSH initiated signaling and thus blocks production of cAMP, leading to a down-regulation of eumelanogenesis (brown/black pigment) and thus increasing synthesis of pheomelanin (yellow/red pigment). The sequence is that of Agouti-signaling protein (ASIP) from Semnopithecus entellus (Northern plains gray langur).